The primary structure comprises 290 residues: Putative tyrosine recombinase TTE1313 (290 aa).

In terms of domain architecture, Core-binding (CB) spans 1–85 (MAESVVGEFL…SIKAFYHYLF (85 aa)). One can recognise a Tyr recombinase domain in the interval 106 to 290 (KEPVTLTVEQ…EVYNKFHPRA (185 aa)). R239 is a catalytic residue. Y283 acts as the O-(3'-phospho-DNA)-tyrosine intermediate in catalysis.

The protein belongs to the 'phage' integrase family.

Its subcellular location is the cytoplasm. Its function is as follows. Site-specific tyrosine recombinase, which acts by catalyzing the cutting and rejoining of the recombining DNA molecules. This Caldanaerobacter subterraneus subsp. tengcongensis (strain DSM 15242 / JCM 11007 / NBRC 100824 / MB4) (Thermoanaerobacter tengcongensis) protein is Putative tyrosine recombinase TTE1313.